The primary structure comprises 255 residues: Zinc D-Ala-D-Ala carboxypeptidase (255 aa).

Residues 1–42 form the signal peptide; sequence MRPRPIRLLLTALVGAGLAFAPVSAVAAPTATASASADVGAL. A Blocked amino end (Asp) modification is found at Asp43. Intrachain disulfides connect Cys45–Cys123 and Cys136–Cys184. Arg180 is a substrate binding site. His196 contributes to the Zn(2+) binding site. A disulfide bridge links Cys212 with Cys253. The active-site Proton donor is the His234. Residues His237 and His239 each contribute to the Zn(2+) site.

The protein belongs to the peptidase M15 family. Zn(2+) serves as cofactor. In terms of processing, the N-terminus is partially blocked as a result of the cyclization of the first two amino acids into anhydroaspartylglycine imide.

The protein resides in the secreted. The enzyme catalyses Cleavage of the bond: (Ac)2-L-lysyl-D-alanyl-|-D-alanine.. This enzyme catalyzes carboxypeptidation and transpeptidation reactions involved in bacterial cell wall metabolism. It effectively catalyzes the transfer of the N-alpha, N-epsilon-diacetyl-L-lysyl-D-alanyl electrophilic group of the standard tripeptide substrate N-alpha,N-epsilon-diacetyl-L-lysyl-D-alanyl-D-alanine to water. It also performs a weak beta-lactamase activity, hydrolyzing penicillin into penicilloate at a very low rate. The protein is Zinc D-Ala-D-Ala carboxypeptidase of Streptomyces albus G.